Reading from the N-terminus, the 513-residue chain is EGF-like domain-containing protein 1 (513 aa).

The signal sequence occupies residues 1–21 (MMHTFLRRLCVVALCLGYIKA). Positions 72 to 108 (PTALCGPPCLNGGECYEPTVGTYMCMCPEAFYGNKCE) constitute an EGF-like domain. 3 disulfides stabilise this stretch: cysteine 76–cysteine 86, cysteine 80–cysteine 96, and cysteine 98–cysteine 107. A ZP domain is found at 115–364 (ECSGTEITIN…TSCDSVVCPS (250 aa)). The disordered stretch occupies residues 356–411 (SCDSVVCPSPPQSVPSNPQNIPPANPQNIPPANPQNIPPANPQISPSSSQRKRRAA). Residues 375–396 (NIPPANPQNIPPANPQNIPPAN) show a composition bias toward pro residues. N-linked (GlcNAc...) asparagine glycosylation is found at asparagine 438 and asparagine 503.

In terms of tissue distribution, component of the acid-insoluble organic matrix of calcified layers of the shell (at protein level).

It localises to the secreted. The polypeptide is EGF-like domain-containing protein 1 (Lottia gigantea (Giant owl limpet)).